We begin with the raw amino-acid sequence, 59 residues long: MCVKFTDAEIAYIKESVENYSSEFDIYDDEQELKLKIYEQIMLKIKSEYKDTYLFRLIN.

Its function is as follows. Excisionase and integrase are necessary for the excision of prophage from the host genome by site-specific recombination at the att site. In Staphylococcus phage L54a (Bacteriophage L54a), this protein is Excisionase (xis).